The primary structure comprises 957 residues: Kinesin heavy chain isoform 5C (957 aa).

The Kinesin motor domain occupies 8-327 (SIKVMCRFRP…LMFGQRAKTI (320 aa)). ATP is bound by residues Gln87, Ser89, Ser90, Gly91, Lys92, Thr93, His94, and Lys99. Residues 174–315 (VSSPEEVMDV…PSVFNEAETK (142 aa)) form a microtubule-binding region. Residues 406–923 (VAGISTEEKE…ARRAHSAQIA (518 aa)) adopt a coiled-coil conformation. The globular stretch occupies residues 859–956 (RCELPKLEKR…GSSSNSTHYQ (98 aa)). The disordered stretch occupies residues 911-957 (KNMARRAHSAQIAKPIRPGHYPASSPTAVHAIRGGGGSSSNSTHYQK).

The protein belongs to the TRAFAC class myosin-kinesin ATPase superfamily. Kinesin family. Kinesin subfamily. Oligomer composed of two heavy chains and two light chains. Interacts with GRIP1 and KLC3. Interacts with TRAK1. Interacts with ZFYVE27. In terms of tissue distribution, highest expression in brain, prostate and testis, and moderate expression in kidney, small intestine and ovary.

It localises to the cytoplasm. Its subcellular location is the cytoskeleton. The protein resides in the cell projection. The protein localises to the dendrite. It catalyses the reaction ATP + H2O = ADP + phosphate + H(+). In terms of biological role, microtubule-associated force-producing protein that may play a role in organelle transport. Has ATPase activity. Involved in synaptic transmission. Mediates dendritic trafficking of mRNAs. Required for anterograde axonal transportation of MAPK8IP3/JIP3 which is essential for MAPK8IP3/JIP3 function in axon elongation. This Homo sapiens (Human) protein is Kinesin heavy chain isoform 5C (KIF5C).